The primary structure comprises 104 residues: Pterin-4-alpha-carbinolamine dehydratase (104 aa).

A2 carries the post-translational modification N-acetylalanine. Substrate is bound by residues 61 to 63 (DHH) and 78 to 81 (STHE).

This sequence belongs to the pterin-4-alpha-carbinolamine dehydratase family. In terms of assembly, homotetramer and homodimer. The major tissues expressing cDcoH are hypothalamus, kidney and liver.

It is found in the cytoplasm. The protein resides in the nucleus. It carries out the reaction (4aS,6R)-4a-hydroxy-L-erythro-5,6,7,8-tetrahydrobiopterin = (6R)-L-erythro-6,7-dihydrobiopterin + H2O. Involved in tetrahydrobiopterin biosynthesis. Seems to both prevent the formation of 7-pterins and accelerate the formation of quinonoid-BH2. Coactivator for HNF1A-dependent transcription. Regulates the dimerization of homeodomain protein HNF1A and enhances its transcriptional activity. Also acts as a coactivator for HNF1B-dependent transcription. The chain is Pterin-4-alpha-carbinolamine dehydratase (PCBD1) from Gallus gallus (Chicken).